We begin with the raw amino-acid sequence, 201 residues long: Small ribosomal subunit protein uS4c (201 aa).

The segment at 20–43 (GLTNKRPKSRNDPTNQSSSRKISQ) is disordered. The span at 31–41 (DPTNQSSSRKI) shows a compositional bias: polar residues. Residues 89–157 (MRLDNIIFRL…IGKNLDLSQK (69 aa)) enclose the S4 RNA-binding domain.

The protein belongs to the universal ribosomal protein uS4 family. Part of the 30S ribosomal subunit. Contacts protein S5. The interaction surface between S4 and S5 is involved in control of translational fidelity.

Its subcellular location is the plastid. The protein resides in the chloroplast. One of the primary rRNA binding proteins, it binds directly to 16S rRNA where it nucleates assembly of the body of the 30S subunit. In terms of biological role, with S5 and S12 plays an important role in translational accuracy. The chain is Small ribosomal subunit protein uS4c (rps4) from Cycas taitungensis (Prince sago).